Here is a 362-residue protein sequence, read N- to C-terminus: Peptide chain release factor 1 (362 aa).

At Gln240 the chain carries N5-methylglutamine.

The protein belongs to the prokaryotic/mitochondrial release factor family. In terms of processing, methylated by PrmC. Methylation increases the termination efficiency of RF1.

The protein resides in the cytoplasm. Functionally, peptide chain release factor 1 directs the termination of translation in response to the peptide chain termination codons UAG and UAA. This is Peptide chain release factor 1 from Bifidobacterium longum subsp. infantis (strain ATCC 15697 / DSM 20088 / JCM 1222 / NCTC 11817 / S12).